Reading from the N-terminus, the 157-residue chain is UPF0251 protein CLD_3165 (157 aa).

It belongs to the UPF0251 family.

The protein is UPF0251 protein CLD_3165 of Clostridium botulinum (strain Okra / Type B1).